The chain runs to 1095 residues: Mediator of RNA polymerase II transcription subunit 15 (1095 aa).

The segment covering 66 to 83 has biased composition (basic and acidic residues); that stretch reads KSKIDAMRSTRDKRKRES. Disordered stretches follow at residues 66 to 197, 265 to 323, 448 to 508, 633 to 672, 737 to 847, and 1050 to 1075; these read KSKI…LTQQ, QQQQ…RNPN, SAAD…LNPT, QQQQ…KNQT, PTMA…QPGN, and SEAA…SMAG. Composition is skewed to low complexity over residues 99–113 and 133–154; these read NNNN…NNLN and NSNA…PNGN. Positions 155–165 are enriched in polar residues; that stretch reads DGTANPQMFMN. Residues 166-178 show a composition bias toward low complexity; that stretch reads QQAQARQQAAARQ. Residues 448-473 show a composition bias toward polar residues; sequence SAADSTMNNSNQPMNIGNNGVNMIPN. Composition is skewed to low complexity over residues 487–500, 633–662, and 780–793; these read QTPQ…QSNR, QQQQ…MQQA, and PTPQ…PSTT. Composition is skewed to polar residues over residues 794–810, 817–847, and 1050–1062; these read NLSA…SATP, PKST…QPGN, and SEAA…SSLM.

Belongs to the Mediator complex subunit 15 family. Component of the Mediator complex.

It localises to the nucleus. Its function is as follows. Component of the Mediator complex, a coactivator involved in regulated gene transcription of nearly all RNA polymerase II-dependent genes. Mediator functions as a bridge to convey information from gene-specific regulatory proteins to the basal RNA polymerase II transcription machinery. Mediator is recruited to promoters by direct interactions with regulatory proteins and serves as a scaffold for the assembly of a functional preinitiation complex with RNA polymerase II and the general transcription factors. The polypeptide is Mediator of RNA polymerase II transcription subunit 15 (GAL11) (Candida glabrata (strain ATCC 2001 / BCRC 20586 / JCM 3761 / NBRC 0622 / NRRL Y-65 / CBS 138) (Yeast)).